The sequence spans 540 residues: 2,3-bisphosphoglycerate-independent phosphoglycerate mutase (540 aa).

Positions 25 and 75 each coordinate Mn(2+). Residue S75 is the Phosphoserine intermediate of the active site. Substrate is bound by residues H136, 166 to 167 (RD), R198, R204, 269 to 272 (RPDR), and K342. Residues D409, H413, D450, H451, and H468 each coordinate Mn(2+).

Belongs to the BPG-independent phosphoglycerate mutase family. Monomer. It depends on Mn(2+) as a cofactor.

It carries out the reaction (2R)-2-phosphoglycerate = (2R)-3-phosphoglycerate. The protein operates within carbohydrate degradation; glycolysis; pyruvate from D-glyceraldehyde 3-phosphate: step 3/5. Catalyzes the interconversion of 2-phosphoglycerate and 3-phosphoglycerate. This is 2,3-bisphosphoglycerate-independent phosphoglycerate mutase from Prochlorococcus marinus subsp. pastoris (strain CCMP1986 / NIES-2087 / MED4).